The chain runs to 349 residues: Crinkler effector protein 5 (349 aa).

Residues 1-17 (MVKLFCSIVGVAGSPFS) form the signal peptide. The LQLFLAK domain stretch occupies residues 18–57 (VEVNEGKTVDDLKKAIKAENLDDPTLRNVAPKNLQLFLAK). A DWL domain region spans residues 58 to 108 (KGDAWLRYNEDLDTYLQSEIDTSSYLHMRASWKLSKPTLFGPDVSLGEDVV). Positions 109–115 (HVLVVVP) match the HVLVXXP motif motif.

This sequence belongs to the Crinkler effector family.

The protein localises to the secreted. Its subcellular location is the host nucleus. Functionally, secreted effector that elicits necrosis in host plants, a characteristic of plant innate immunity. The polypeptide is Crinkler effector protein 5 (Phytophthora infestans (Potato late blight agent)).